The following is a 176-amino-acid chain: Small ribosomal subunit protein uS8c (176 aa).

This sequence belongs to the universal ribosomal protein uS8 family. As to quaternary structure, part of the 30S ribosomal subunit.

The protein localises to the plastid. It localises to the chloroplast. Functionally, one of the primary rRNA binding proteins, it binds directly to 16S rRNA central domain where it helps coordinate assembly of the platform of the 30S subunit. The chain is Small ribosomal subunit protein uS8c (rps8) from Stigeoclonium helveticum (Green alga).